Here is a 251-residue protein sequence, read N- to C-terminus: Pyrroloquinoline-quinone synthase (251 aa).

This sequence belongs to the PqqC family.

The enzyme catalyses 6-(2-amino-2-carboxyethyl)-7,8-dioxo-1,2,3,4,7,8-hexahydroquinoline-2,4-dicarboxylate + 3 O2 = pyrroloquinoline quinone + 2 H2O2 + 2 H2O + H(+). The protein operates within cofactor biosynthesis; pyrroloquinoline quinone biosynthesis. In terms of biological role, ring cyclization and eight-electron oxidation of 3a-(2-amino-2-carboxyethyl)-4,5-dioxo-4,5,6,7,8,9-hexahydroquinoline-7,9-dicarboxylic-acid to PQQ. This Pseudomonas putida (strain ATCC 700007 / DSM 6899 / JCM 31910 / BCRC 17059 / LMG 24140 / F1) protein is Pyrroloquinoline-quinone synthase.